The primary structure comprises 123 residues: DLWEFGKMILKETGKNPFPYYGAYGCYCGWGGRGKPKDKTDDRCCFVHDCCRYKKLTGCPKTNDRYSYSWKDLTIVCGEDDPCKELCECDKAAAVCFRENLGTYNKKYRYHLRSLCKKADKPC.

3 residues coordinate Ca(2+): Y27, G29, and G31. 6 disulfides stabilise this stretch: C28–C45, C44–C96, C50–C123, C51–C89, C59–C83, and C77–C87. H48 is a catalytic residue. Ca(2+) is bound at residue D49. Residue D90 is part of the active site.

It belongs to the phospholipase A2 family. Group II subfamily. D49 sub-subfamily. As to quaternary structure, monomer. Ca(2+) serves as cofactor. Expressed by the venom gland.

The protein localises to the secreted. The catalysed reaction is a 1,2-diacyl-sn-glycero-3-phosphocholine + H2O = a 1-acyl-sn-glycero-3-phosphocholine + a fatty acid + H(+). With respect to regulation, inhibited by divalent cations different from calcium ions (cadmium, magnesium, manganese, zinc), since they act as competitive antagonists of this cofactor. Snake venom phospholipase A2 (PLA2) that induces in vivo myotoxicity, moderates footpad edema, and causes in vitro neuromuscular blockade. PLA2 catalyzes the calcium-dependent hydrolysis of the 2-acyl groups in 3-sn-phosphoglycerides. This Bothrocophias hyoprora (Amazonian hognose viper) protein is Basic phospholipase A2 Ph-TX1.